The chain runs to 237 residues: Cysteine-rich venom protein DIS1 (237 aa).

An N-terminal signal peptide occupies residues 1 to 18 (MFVFILLSLAAVLQQSFG). The SCP domain maps to 37 to 165 (VDKHNAFRRS…SYNYFYVCQY (129 aa)). Cystine bridges form between Cys74/Cys152, Cys91/Cys166, Cys147/Cys163, Cys185/Cys192, Cys188/Cys197, Cys201/Cys234, and Cys219/Cys232. The ShKT domain maps to 201–234 (CSREDVFMNCKSLVAQSNCQDDYIRKNCPATCFC).

Belongs to the CRISP family. Expressed by the venom gland.

It localises to the secreted. Its function is as follows. Weakly blocks contraction of smooth muscle elicited by high potassium-induced depolarization, but does not block caffeine-stimulated contraction. May target voltage-gated calcium channels on smooth muscle. The chain is Cysteine-rich venom protein DIS1 from Dispholidus typus (Boomslang).